Here is a 40-residue protein sequence, read N- to C-terminus: U1-ectatotoxin-Eb1a subunit A (40 aa).

Belongs to the ectatomin family. Ectatomin-Eq subfamily. As to quaternary structure, heterodimer of subunits A and B; disulfide-linked. In terms of tissue distribution, expressed by the venom gland.

It localises to the secreted. Its subcellular location is the target cell membrane. In Ectatomma brunneum (Ant), this protein is U1-ectatotoxin-Eb1a subunit A.